Consider the following 223-residue polypeptide: MAKHSHDHTHDHHDRPRRVRKPGEPLRIGVGGPVGSGKTALVAAICRQLRDELSLAVLTNDIYTTEDADFLRKHAVLPDSRITAVQTGGCPHTAIRDDITANLDAIDDLIAAHDALDLILVESGGDNLTATFSSGLVDVQIFVIDVAGGDKVPRKGGPGVTFSDLLVVNKTDLAPLVGADLKVMARDAEAVRDGRPTVLQSLTEDPAATKVLDWVRSQLAAAG.

Residues 1–31 form a disordered region; it reads MAKHSHDHTHDHHDRPRRVRKPGEPLRIGVG. 32 to 39 serves as a coordination point for GTP; it reads GPVGSGKT.

This sequence belongs to the SIMIBI class G3E GTPase family. UreG subfamily. Homodimer. UreD, UreF and UreG form a complex that acts as a GTP-hydrolysis-dependent molecular chaperone, activating the urease apoprotein by helping to assemble the nickel containing metallocenter of UreC. The UreE protein probably delivers the nickel.

Its subcellular location is the cytoplasm. In terms of biological role, facilitates the functional incorporation of the urease nickel metallocenter. This process requires GTP hydrolysis, probably effectuated by UreG. This Mycobacterium marinum (strain ATCC BAA-535 / M) protein is Urease accessory protein UreG.